Reading from the N-terminus, the 367-residue chain is MASPCLVAVLVFLCAIVSCYSDNPIDSCWRGDSNWDQNRMKLADCVVGFGSSTMGGKGGEIYTVTSSEDNPVNPTPGTLRYGATREKALWIIFSQNMNIKLQMPLYVAGYKTIDGRGADVHLGNGGPCLFMRKASHVILHGLHIHGCNTSVLGDVLVSESIGVEPVHAQDGDAITMRNVTNAWIDHNSLSDCSDGLIDVTLGSTGITISNNHFFNHHKVMLLGHDDTYDDDKSMKVTVAFNQFGPNAGQRMPRARYGLVHVANNNYDQWNIYAIGGSSNPTILSEGNSFTAPNESYKKEVTKRIGCETTSACANWVWRSTRDAFTNGAYFVSSGKAEDTNIYNSNEAFKVENGNAAPQLTQNAGVVA.

Residues 1-21 form the signal peptide; sequence MASPCLVAVLVFLCAIVSCYS. Disulfide bonds link C28–C45 and C128–C147. N148 is a glycosylation site (N-linked (GlcNAc...) asparagine). A Ca(2+)-binding site is contributed by D170. Residue N178 is glycosylated (N-linked (GlcNAc...) asparagine). Residues D194 and D198 each contribute to the Ca(2+) site. Residue R250 is part of the active site. N293 is a glycosylation site (N-linked (GlcNAc...) asparagine). Residues C306 and C312 are joined by a disulfide bond.

This sequence belongs to the polysaccharide lyase 1 family. Amb a subfamily. Requires Ca(2+) as cofactor.

It carries out the reaction Eliminative cleavage of (1-&gt;4)-alpha-D-galacturonan to give oligosaccharides with 4-deoxy-alpha-D-galact-4-enuronosyl groups at their non-reducing ends.. It functions in the pathway glycan metabolism; pectin degradation; 2-dehydro-3-deoxy-D-gluconate from pectin: step 2/5. Its function is as follows. Has pectate lyase activity. This chain is Pectate lyase 1, found in Hesperocyparis arizonica (Arizona cypress).